The following is a 212-amino-acid chain: Ribosomal RNA small subunit methyltransferase G (212 aa).

S-adenosyl-L-methionine contacts are provided by residues Gly-80, Leu-85, 131–132 (AE), and Arg-146.

The protein belongs to the methyltransferase superfamily. RNA methyltransferase RsmG family.

Its subcellular location is the cytoplasm. The catalysed reaction is guanosine(527) in 16S rRNA + S-adenosyl-L-methionine = N(7)-methylguanosine(527) in 16S rRNA + S-adenosyl-L-homocysteine. Its function is as follows. Specifically methylates the N7 position of guanine in position 527 of 16S rRNA. In Xanthomonas campestris pv. campestris (strain B100), this protein is Ribosomal RNA small subunit methyltransferase G.